Consider the following 453-residue polypeptide: uncharacterized protein (453 aa).

Residues 5–63 form the TRAM domain; sequence LLKKNQSIELTIEDLTHDGSGVGKIDGYPLFIPNTLPGEKVTAKIIKLNKNYGFARMEN. Residues Cys76, Cys82, Cys85, and Cys162 each coordinate [4Fe-4S] cluster. Gln285, Tyr314, Glu335, and Asp383 together coordinate S-adenosyl-L-methionine. The active-site Nucleophile is the Cys410.

It belongs to the class I-like SAM-binding methyltransferase superfamily. RNA M5U methyltransferase family.

This is an uncharacterized protein from Listeria monocytogenes serotype 4b (strain F2365).